Consider the following 92-residue polypeptide: Small ribosomal subunit protein uS19 (92 aa).

Belongs to the universal ribosomal protein uS19 family.

Functionally, protein S19 forms a complex with S13 that binds strongly to the 16S ribosomal RNA. The protein is Small ribosomal subunit protein uS19 of Mesorhizobium japonicum (strain LMG 29417 / CECT 9101 / MAFF 303099) (Mesorhizobium loti (strain MAFF 303099)).